A 313-amino-acid chain; its full sequence is tRNA pseudouridine synthase B (313 aa).

Histidine 44 contacts substrate. Residue aspartate 49 is the Nucleophile of the active site. Substrate is bound by residues tyrosine 77, tyrosine 180, and leucine 201.

This sequence belongs to the pseudouridine synthase TruB family. Type 1 subfamily.

The enzyme catalyses uridine(55) in tRNA = pseudouridine(55) in tRNA. In terms of biological role, responsible for synthesis of pseudouridine from uracil-55 in the psi GC loop of transfer RNAs. In Hamiltonella defensa subsp. Acyrthosiphon pisum (strain 5AT), this protein is tRNA pseudouridine synthase B.